We begin with the raw amino-acid sequence, 78 residues long: Putative defensin-like protein 133 (78 aa).

The first 24 residues, 1-24, serve as a signal peptide directing secretion; that stretch reads MKRSFLLLLTILTIFIILGQGVMG. 4 disulfides stabilise this stretch: Cys-34-Cys-75, Cys-44-Cys-68, Cys-49-Cys-72, and Cys-53-Cys-74.

It belongs to the DEFL family.

Its subcellular location is the secreted. The protein is Putative defensin-like protein 133 (LCR33) of Arabidopsis thaliana (Mouse-ear cress).